A 119-amino-acid chain; its full sequence is uncharacterized protein (119 aa).

Cys9 and Cys12 are disulfide-bonded.

Belongs to the ArsC family.

This is an uncharacterized protein from Streptomyces viridochromogenes.